The sequence spans 211 residues: Soluble inorganic pyrophosphatase PPA1 (211 aa).

2 residues coordinate substrate: lysine 61 and arginine 75. The active-site Proton donor is the tyrosine 83. Residue tyrosine 87 participates in substrate binding. 3 residues coordinate Mg(2+): aspartate 97, aspartate 102, and aspartate 134. Tyrosine 171 contributes to the substrate binding site.

It belongs to the PPase family. Mg(2+) is required as a cofactor.

It localises to the cytoplasm. The catalysed reaction is diphosphate + H2O = 2 phosphate + H(+). Strongly inhibited by Ca(2+). Its function is as follows. Catalyzes the irreversible hydrolysis of pyrophosphate (PPi) to phosphate. The chain is Soluble inorganic pyrophosphatase PPA1 from Solanum tuberosum (Potato).